The chain runs to 284 residues: Probable endonuclease 4 (284 aa).

9 residues coordinate Zn(2+): H66, H106, E142, D176, H179, H213, D226, H228, and E258.

It belongs to the AP endonuclease 2 family. Requires Zn(2+) as cofactor.

The enzyme catalyses Endonucleolytic cleavage to 5'-phosphooligonucleotide end-products.. In terms of biological role, endonuclease IV plays a role in DNA repair. It cleaves phosphodiester bonds at apurinic or apyrimidinic (AP) sites, generating a 3'-hydroxyl group and a 5'-terminal sugar phosphate. The protein is Probable endonuclease 4 of Natranaerobius thermophilus (strain ATCC BAA-1301 / DSM 18059 / JW/NM-WN-LF).